The sequence spans 519 residues: Aldehyde dehydrogenase X, mitochondrial (519 aa).

The transit peptide at 1-19 (MLTARLLLPRLLCLQGRTT) directs the protein to the mitochondrion. An N6-acetyllysine modification is found at lysine 53. Lysine 54 carries the post-translational modification N6-acetyllysine; alternate. Position 54 is an N6-succinyllysine; alternate (lysine 54). Position 83 is an N6-succinyllysine (lysine 83). 264–269 (GSTEVG) lines the NAD(+) pocket. The active-site Proton acceptor is glutamate 287. Cysteine 321 acts as the Nucleophile in catalysis. An N6-acetyllysine; alternate mark is found at lysine 366, lysine 385, lysine 401, lysine 416, and lysine 428. N6-succinyllysine; alternate occurs at positions 366, 385, 401, 416, and 428. At lysine 431 the chain carries N6-acetyllysine.

It belongs to the aldehyde dehydrogenase family. In terms of assembly, homotetramer.

It localises to the mitochondrion matrix. The catalysed reaction is an aldehyde + NAD(+) + H2O = a carboxylate + NADH + 2 H(+). Its pathway is alcohol metabolism; ethanol degradation; acetate from ethanol: step 2/2. Functionally, ALDHs play a major role in the detoxification of alcohol-derived acetaldehyde. They are involved in the metabolism of corticosteroids, biogenic amines, neurotransmitters, and lipid peroxidation. In Mus musculus (Mouse), this protein is Aldehyde dehydrogenase X, mitochondrial (Aldh1b1).